A 231-amino-acid polypeptide reads, in one-letter code: Large ribosomal subunit protein uL1 (231 aa).

Belongs to the universal ribosomal protein uL1 family. In terms of assembly, part of the 50S ribosomal subunit.

Binds directly to 23S rRNA. The L1 stalk is quite mobile in the ribosome, and is involved in E site tRNA release. In terms of biological role, protein L1 is also a translational repressor protein, it controls the translation of the L11 operon by binding to its mRNA. This Acidovorax ebreus (strain TPSY) (Diaphorobacter sp. (strain TPSY)) protein is Large ribosomal subunit protein uL1.